Consider the following 65-residue polypeptide: Conotoxin VnMLCL-041 (65 aa).

The signal sequence occupies residues 1–19 (MLCLPVFIILLLLASPAAP). The propeptide occupies 20–43 (NPLQTRIQSNLIRAGPEDANIKTD). Lys64 carries the post-translational modification Lysine amide.

Belongs to the conotoxin T superfamily. In terms of tissue distribution, expressed by the venom duct.

The protein localises to the secreted. The sequence is that of Conotoxin VnMLCL-041 from Conus ventricosus (Mediterranean cone).